Reading from the N-terminus, the 255-residue chain is Ribosomal RNA small subunit methyltransferase G (255 aa).

Residues G89, F94, 112–114, 140–141, and R159 contribute to the S-adenosyl-L-methionine site; these read DST and VE.

The protein belongs to the methyltransferase superfamily. RNA methyltransferase RsmG family.

It localises to the cytoplasm. Its function is as follows. Specifically methylates the N7 position of a guanine in 16S rRNA. The polypeptide is Ribosomal RNA small subunit methyltransferase G (Trichodesmium erythraeum (strain IMS101)).